Reading from the N-terminus, the 112-residue chain is ATP-dependent Clp protease adapter protein ClpS (112 aa).

This sequence belongs to the ClpS family. As to quaternary structure, binds to the N-terminal domain of the chaperone ClpA.

Functionally, involved in the modulation of the specificity of the ClpAP-mediated ATP-dependent protein degradation. This Rhodococcus opacus (strain B4) protein is ATP-dependent Clp protease adapter protein ClpS.